The primary structure comprises 121 residues: Large ribosomal subunit protein bL12 (121 aa).

The protein belongs to the bacterial ribosomal protein bL12 family. Homodimer. Part of the ribosomal stalk of the 50S ribosomal subunit. Forms a multimeric L10(L12)X complex, where L10 forms an elongated spine to which 2 to 4 L12 dimers bind in a sequential fashion. Binds GTP-bound translation factors.

In terms of biological role, forms part of the ribosomal stalk which helps the ribosome interact with GTP-bound translation factors. Is thus essential for accurate translation. This Streptococcus pyogenes serotype M3 (strain ATCC BAA-595 / MGAS315) protein is Large ribosomal subunit protein bL12.